The chain runs to 244 residues: 15,16-dihydrobiliverdin:ferredoxin oxidoreductase (244 aa).

It belongs to the HY2 family.

It carries out the reaction 15,16-dihydrobiliverdin + oxidized 2[4Fe-4S]-[ferredoxin] = biliverdin IXalpha + reduced 2[4Fe-4S]-[ferredoxin] + 2 H(+). Its function is as follows. Catalyzes the two-electron reduction of biliverdin IX-alpha at the C15 methine bridge. The sequence is that of 15,16-dihydrobiliverdin:ferredoxin oxidoreductase (pebA) from Nostoc punctiforme (strain ATCC 29133 / PCC 73102).